Reading from the N-terminus, the 219-residue chain is Holliday junction branch migration complex subunit RuvA (219 aa).

The domain I stretch occupies residues 1-67 (MIGWLRGERI…DDGSSLFGFP (67 aa)). The tract at residues 68-146 (DRRERDLFRV…AWSAEKNSDH (79 aa)) is domain II. Positions 147–161 (SDLSLVDRSDLKSLP) are flexible linker. The tract at residues 162 to 219 (IEPDPLQDLQLTLSTLGYEDLEIRRAMRAVATGEEVPAANDGDGWLRASLRWLNRPSA) is domain III.

It belongs to the RuvA family. Homotetramer. Forms an RuvA(8)-RuvB(12)-Holliday junction (HJ) complex. HJ DNA is sandwiched between 2 RuvA tetramers; dsDNA enters through RuvA and exits via RuvB. An RuvB hexamer assembles on each DNA strand where it exits the tetramer. Each RuvB hexamer is contacted by two RuvA subunits (via domain III) on 2 adjacent RuvB subunits; this complex drives branch migration. In the full resolvosome a probable DNA-RuvA(4)-RuvB(12)-RuvC(2) complex forms which resolves the HJ.

The protein resides in the cytoplasm. Its function is as follows. The RuvA-RuvB-RuvC complex processes Holliday junction (HJ) DNA during genetic recombination and DNA repair, while the RuvA-RuvB complex plays an important role in the rescue of blocked DNA replication forks via replication fork reversal (RFR). RuvA specifically binds to HJ cruciform DNA, conferring on it an open structure. The RuvB hexamer acts as an ATP-dependent pump, pulling dsDNA into and through the RuvAB complex. HJ branch migration allows RuvC to scan DNA until it finds its consensus sequence, where it cleaves and resolves the cruciform DNA. The chain is Holliday junction branch migration complex subunit RuvA from Synechococcus sp. (strain CC9311).